We begin with the raw amino-acid sequence, 592 residues long: Probable 6-phosphofructo-2-kinase C222.13c (592 aa).

The tract at residues 1–80 (MSNTGSARTE…PANDVEKMEV (80 aa)) is disordered. A compositionally biased stretch (basic and acidic residues) spans 57-66 (SIFKREELTP). An ATP-binding site is contributed by 150–157 (GIPATGKS). Residues aspartate 235 and cysteine 266 contribute to the active site. Arginine 300 contacts beta-D-fructose 6-phosphate. Histidine 527 serves as the catalytic Proton donor.

It is found in the cytoplasm. It localises to the nucleus. It catalyses the reaction beta-D-fructose 6-phosphate + ATP = beta-D-fructose 2,6-bisphosphate + ADP + H(+). In terms of biological role, synthesis of fructose 2,6-bisphosphate. This Schizosaccharomyces pombe (strain 972 / ATCC 24843) (Fission yeast) protein is Probable 6-phosphofructo-2-kinase C222.13c.